We begin with the raw amino-acid sequence, 725 residues long: Putative oligopeptide transporter YGL114W (725 aa).

Helical transmembrane passes span alanine 28–leucine 48, phenylalanine 134–proline 154, isoleucine 254–valine 274, tryptophan 353–valine 373, isoleucine 449–isoleucine 469, isoleucine 472–isoleucine 492, phenylalanine 564–cysteine 584, tyrosine 644–asparagine 664, and isoleucine 697–phenylalanine 717.

It belongs to the oligopeptide OPT transporter family.

The protein localises to the membrane. This is Putative oligopeptide transporter YGL114W from Saccharomyces cerevisiae (strain ATCC 204508 / S288c) (Baker's yeast).